The primary structure comprises 697 residues: Elongation factor G (697 aa).

One can recognise a tr-type G domain in the interval 10 to 285 (ERTRNIGIMA…AVVDYLPSPL (276 aa)). Residues 19-26 (AHIDAGKT), 83-87 (DTPGH), and 137-140 (NKMD) contribute to the GTP site.

It belongs to the TRAFAC class translation factor GTPase superfamily. Classic translation factor GTPase family. EF-G/EF-2 subfamily.

It localises to the cytoplasm. Catalyzes the GTP-dependent ribosomal translocation step during translation elongation. During this step, the ribosome changes from the pre-translocational (PRE) to the post-translocational (POST) state as the newly formed A-site-bound peptidyl-tRNA and P-site-bound deacylated tRNA move to the P and E sites, respectively. Catalyzes the coordinated movement of the two tRNA molecules, the mRNA and conformational changes in the ribosome. This Pediococcus pentosaceus (strain ATCC 25745 / CCUG 21536 / LMG 10740 / 183-1w) protein is Elongation factor G.